Here is a 383-residue protein sequence, read N- to C-terminus: Queuine tRNA-ribosyltransferase (383 aa).

The Proton acceptor role is filled by aspartate 92. Substrate is bound by residues aspartate 92 to phenylalanine 96, aspartate 146, glutamine 190, and glycine 217. The RNA binding stretch occupies residues glycine 248 to aspartate 254. The active-site Nucleophile is the aspartate 267. The interval threonine 272–arginine 276 is RNA binding; important for wobble base 34 recognition. Cysteine 310, cysteine 312, cysteine 315, and histidine 341 together coordinate Zn(2+).

It belongs to the queuine tRNA-ribosyltransferase family. As to quaternary structure, homodimer. Within each dimer, one monomer is responsible for RNA recognition and catalysis, while the other monomer binds to the replacement base PreQ1. It depends on Zn(2+) as a cofactor.

The catalysed reaction is 7-aminomethyl-7-carbaguanine + guanosine(34) in tRNA = 7-aminomethyl-7-carbaguanosine(34) in tRNA + guanine. The protein operates within tRNA modification; tRNA-queuosine biosynthesis. Functionally, catalyzes the base-exchange of a guanine (G) residue with the queuine precursor 7-aminomethyl-7-deazaguanine (PreQ1) at position 34 (anticodon wobble position) in tRNAs with GU(N) anticodons (tRNA-Asp, -Asn, -His and -Tyr). Catalysis occurs through a double-displacement mechanism. The nucleophile active site attacks the C1' of nucleotide 34 to detach the guanine base from the RNA, forming a covalent enzyme-RNA intermediate. The proton acceptor active site deprotonates the incoming PreQ1, allowing a nucleophilic attack on the C1' of the ribose to form the product. After dissociation, two additional enzymatic reactions on the tRNA convert PreQ1 to queuine (Q), resulting in the hypermodified nucleoside queuosine (7-(((4,5-cis-dihydroxy-2-cyclopenten-1-yl)amino)methyl)-7-deazaguanosine). The sequence is that of Queuine tRNA-ribosyltransferase from Psychrobacter cryohalolentis (strain ATCC BAA-1226 / DSM 17306 / VKM B-2378 / K5).